The chain runs to 422 residues: Chorismate synthase (422 aa).

Residues R43 and R49 each coordinate NADP(+). FMN-binding positions include R143–S145, Q264–A265, G309, K324–T328, and R350.

The protein belongs to the chorismate synthase family. As to quaternary structure, homotetramer. FMNH2 is required as a cofactor.

The catalysed reaction is 5-O-(1-carboxyvinyl)-3-phosphoshikimate = chorismate + phosphate. It participates in metabolic intermediate biosynthesis; chorismate biosynthesis; chorismate from D-erythrose 4-phosphate and phosphoenolpyruvate: step 7/7. In terms of biological role, catalyzes the anti-1,4-elimination of the C-3 phosphate and the C-6 proR hydrogen from 5-enolpyruvylshikimate-3-phosphate (EPSP) to yield chorismate, which is the branch point compound that serves as the starting substrate for the three terminal pathways of aromatic amino acid biosynthesis. This reaction introduces a second double bond into the aromatic ring system. This Corynebacterium jeikeium (strain K411) protein is Chorismate synthase.